Consider the following 105-residue polypeptide: MAQLKVVTRDGSLHEFEAPDGYTVMEAIRDQGIDELLAICGGCCSCATCHVFVEEAFLDKLPPLKGDEDDLLDSSDHRQANSRLSCQLPIGPELGGMTVTIAPED.

The 2Fe-2S ferredoxin-type domain occupies 2-105 (AQLKVVTRDG…GMTVTIAPED (104 aa)). 4 residues coordinate [2Fe-2S] cluster: cysteine 40, cysteine 46, cysteine 49, and cysteine 86.

The protein belongs to the adrenodoxin/putidaredoxin family. Monomer. The three-component monooxygenase is composed of an oxygenase (LigXa), a ferredoxin (LigXc) and a ferredoxin reductase (LigXd). [2Fe-2S] cluster is required as a cofactor.

It catalyses the reaction 5,5'-dehydrodivanillate + NADH + O2 + H(+) = 2,2',3-trihydroxy-3'-methoxy-5,5'-dicarboxybiphenyl + formaldehyde + NAD(+) + H2O. Functionally, involved in the catabolism of 5,5'-dehydrodivanillate (DDVA), an intermediate in the biodegradation of lignin. Part of a three-component monooxygenase that catalyzes the O-demethylation of DDVA, leading to the formation of 2,2',3-trihydroxy-3'-methoxy-5,5'-dicarboxybiphenyl (OH-DDVA). LigXc probably functions as an intermediate electron transfer protein between LigXd and LigXa. The chain is 5,5'-dehydrodivanillate O-demethylase ferredoxin subunit from Sphingobium sp. (strain NBRC 103272 / SYK-6).